The primary structure comprises 302 residues: Sulfate adenylyltransferase subunit 2 (302 aa).

The segment at 280–302 (RQGRLIDSDQSASMEQKKRQGYF) is disordered.

This sequence belongs to the PAPS reductase family. CysD subfamily. In terms of assembly, heterodimer composed of CysD, the smaller subunit, and CysN.

It catalyses the reaction sulfate + ATP + H(+) = adenosine 5'-phosphosulfate + diphosphate. It participates in sulfur metabolism; hydrogen sulfide biosynthesis; sulfite from sulfate: step 1/3. Functionally, with CysN forms the ATP sulfurylase (ATPS) that catalyzes the adenylation of sulfate producing adenosine 5'-phosphosulfate (APS) and diphosphate, the first enzymatic step in sulfur assimilation pathway. APS synthesis involves the formation of a high-energy phosphoric-sulfuric acid anhydride bond driven by GTP hydrolysis by CysN coupled to ATP hydrolysis by CysD. The sequence is that of Sulfate adenylyltransferase subunit 2 from Shewanella oneidensis (strain ATCC 700550 / JCM 31522 / CIP 106686 / LMG 19005 / NCIMB 14063 / MR-1).